Here is a 298-residue protein sequence, read N- to C-terminus: Putative cysteine protease YopT-like blr2058 (298 aa).

The span at 1–14 (MYNRVDGEYAHTEQ) shows a compositional bias: basic and acidic residues. Disordered regions lie at residues 1–25 (MYNR…ADGS) and 59–80 (SDAI…SSSS). Low complexity predominate over residues 65-80 (SSNTSGLSTSSLSSSS). The active site involves C109. The span at 137–162 (NHRSAARRQEQSEKLKTQLKEDKAEG) shows a compositional bias: basic and acidic residues. Positions 137–166 (NHRSAARRQEQSEKLKTQLKEDKAEGSHNF) are disordered. Catalysis depends on residues H223 and D238.

This sequence belongs to the peptidase C58 family.

Its function is as follows. Potential cysteine protease, which may play a central role after invasion of host cell. The protein is Putative cysteine protease YopT-like blr2058 of Bradyrhizobium diazoefficiens (strain JCM 10833 / BCRC 13528 / IAM 13628 / NBRC 14792 / USDA 110).